A 358-amino-acid polypeptide reads, in one-letter code: tRNA-specific 2-thiouridylase MnmA (358 aa).

Residues 6–13 (AMSGGVDS) and L32 contribute to the ATP site. Catalysis depends on C101, which acts as the Nucleophile. A disulfide bridge links C101 with C193. Position 125 (G125) interacts with ATP. The segment at 143-145 (KDQ) is interaction with tRNA. C193 serves as the catalytic Cysteine persulfide intermediate.

Belongs to the MnmA/TRMU family.

The protein localises to the cytoplasm. It catalyses the reaction S-sulfanyl-L-cysteinyl-[protein] + uridine(34) in tRNA + AH2 + ATP = 2-thiouridine(34) in tRNA + L-cysteinyl-[protein] + A + AMP + diphosphate + H(+). Catalyzes the 2-thiolation of uridine at the wobble position (U34) of tRNA, leading to the formation of s(2)U34. The chain is tRNA-specific 2-thiouridylase MnmA from Mycolicibacterium paratuberculosis (strain ATCC BAA-968 / K-10) (Mycobacterium paratuberculosis).